The primary structure comprises 264 residues: Glycerol uptake facilitator protein (264 aa).

Over 1–3 (MDK) the chain is Cytoplasmic. Residues 4–32 (SLKANCIGEFLGTALLIFFGVGCVAALKV) traverse the membrane as a helical segment. Topologically, residues 33-37 (AGASF) are periplasmic. Residues 38–58 (GLWEISIMWGMGVALAVYATA) form a helical membrane-spanning segment. Residues 59–61 (GLS) lie on the Cytoplasmic side of the membrane. Residues 62–65 (GAHL) lie within the membrane without spanning it. The NPA 1 signature appears at 66 to 68 (NPA). The helical intramembrane region spans 66 to 76 (NPAVTIALWKF). Residues 77 to 82 (ACFDGK) lie on the Cytoplasmic side of the membrane. Residues 83 to 106 (KVIPYIISQMLGAFFAAALVYALY) traverse the membrane as a helical segment. The Periplasmic portion of the chain corresponds to 107–141 (RNVFIDYETVHNIVRGTQESLSLAGTFSTYPHPSL). The chain crosses the membrane as a helical span at residues 142–167 (SIGGAFAVEFVITAILMALIMALTDD). Over 168–175 (GNGVPRGP) the chain is Cytoplasmic. The chain crosses the membrane as a helical span at residues 176 to 192 (LAPLLIGILIAVIGGAM). The Periplasmic segment spans residues 193-196 (GPLT). Residues 197-200 (GFAM) lie within the membrane without spanning it. The NPA 2 motif lies at 201–203 (NPA). An intramembrane region (helical) is located at residues 201–214 (NPARDFGPKFFAYL). At 215–229 (AGWGELALTGGREIP) the chain is on the periplasmic side. The helical transmembrane segment at 230–252 (YFIVPMVAPVLGALAGAWLYKKA) threads the bilayer. The Cytoplasmic portion of the chain corresponds to 253 to 264 (IGGNLPCNCGCE).

This sequence belongs to the MIP/aquaporin (TC 1.A.8) family.

The protein resides in the cell inner membrane. It catalyses the reaction glycerol(in) = glycerol(out). Mediates glycerol diffusion across the cytoplasmic membrane via a pore-type mechanism. In Haemophilus influenzae (strain ATCC 51907 / DSM 11121 / KW20 / Rd), this protein is Glycerol uptake facilitator protein (glpF).